The sequence spans 272 residues: MQNIINSWFVQGMIKATYDMWLKGWDERNGGNVSLRLLDDDVVSYKDEFYQNPRHVEITQNITALANQYFIVTGSGKFFRNVIIDPADTLAVIKVDEQGKGYYIMWGLVNGGVPTSELPAHLQSHIVRMKVSGGKDRVIMHCHATNLIALTYVLELDPKVITRELWEMSTECLVVFPDGVGVLPWMTPGKDEIGYATAQEMAQHPLVLWAFHGVFGTGPTLDDAFGLIDTAEKSAEILVKVLSMGGKRQTIQTDEFKLLAERFGVTPMDGVL.

The active site involves glutamate 117. Positions 141, 143, and 212 each coordinate Zn(2+).

This sequence belongs to the aldolase class II family. RhaD subfamily. Requires Zn(2+) as cofactor.

It is found in the cytoplasm. It catalyses the reaction L-rhamnulose 1-phosphate = (S)-lactaldehyde + dihydroxyacetone phosphate. The protein operates within carbohydrate degradation; L-rhamnose degradation; glycerone phosphate from L-rhamnose: step 3/3. Functionally, catalyzes the reversible cleavage of L-rhamnulose-1-phosphate to dihydroxyacetone phosphate (DHAP) and L-lactaldehyde. This chain is Rhamnulose-1-phosphate aldolase, found in Mannheimia succiniciproducens (strain KCTC 0769BP / MBEL55E).